The following is a 501-amino-acid chain: Cystine/glutamate transporter (501 aa).

The Cytoplasmic segment spans residues 1-43 (MVRKPVVSTISKGGYLQGNVNGRLPSLGNKEPPGQEKVQLKRK). Serine 26 carries the post-translational modification Phosphoserine. The chain crosses the membrane as a helical span at residues 44–64 (VTLLRGVSIIIGTIIGAGIFI). The Extracellular segment spans residues 65–74 (SPKGVLQNTG). A helical membrane pass occupies residues 75–95 (SVGMSLTIWTVCGVLSLFGAL). The Cytoplasmic portion of the chain corresponds to 96 to 101 (SYAELG). The stretch at 102–116 (TTIKKSGGHYTYILE) is an intramembrane region. Over 117–130 (VFGPLPAFVRVWVE) the chain is Cytoplasmic. Residues 131–150 (LLIIRPAATAVISLAFGRYI) form a helical membrane-spanning segment. Arginine 135 contacts L-glutamate. At 151–163 (LEPFFIQCEIPEL) the chain is on the extracellular side. Residues 164–179 (AIKLITAVGITVVMVL) traverse the membrane as a helical segment. Topologically, residues 180 to 193 (NSMSVSWSARIQIF) are cytoplasmic. Residues 194–210 (LTFCKLTAILIIIVPGV) traverse the membrane as a helical segment. The Extracellular segment spans residues 211-234 (MQLIKGQTQNFKDAFSGRDSSITR). The helical transmembrane segment at 235-255 (LPLAFYYGMYAYAGWFYLNFV) threads the bilayer. Tyrosine 244 is a binding site for L-glutamate. Residues 256–265 (TEEVENPEKT) lie on the Cytoplasmic side of the membrane. The chain crosses the membrane as a helical span at residues 266–286 (IPLAICISMAIVTIGYVLTNV). Topologically, residues 287–317 (AYFTTINAEELLLSNAVAVTFSERLLGNFSL) are extracellular. N-linked (GlcNAc...) asparagine glycosylation occurs at asparagine 314. Residues 318–338 (AVPIFVALSCFGSMNGGVFAV) form a helical membrane-spanning segment. Over 339 to 364 (SRLFYVASREGHLPEILSMIHVRKHT) the chain is Cytoplasmic. The chain crosses the membrane as a helical span at residues 365–385 (PLPAVIVLHPLTMIMLFSGDL). Over 386–387 (DS) the chain is Extracellular. A helical transmembrane segment spans residues 388 to 408 (LLNFLSFARWLFIGLAVAGLI). The Cytoplasmic portion of the chain corresponds to 409–422 (YLRYKCPDMHRPFK). The chain crosses the membrane as a helical span at residues 423–443 (VPLFIPALFSFTCLFMVALSL). Topologically, residues 444-449 (YSDPFS) are extracellular. A helical transmembrane segment spans residues 450 to 470 (TGIGFVITLTGVPAYYLFIIW). Residues 471 to 501 (DKKPRWFRIMSEKITRTLQIILEVVPEEDKL) are Cytoplasmic-facing.

Belongs to the amino acid-polyamine-organocation (APC) superfamily. L-type amino acid transporter (LAT) (TC 2.A.3.8) family. In terms of assembly, disulfide-linked heterodimer with the amino acid transport protein SLC3A2/4F2hc; this interaction mediates cell membrane localization. Ubiquitinated by TRIM26; leading to proteasomal degradation. In terms of tissue distribution, expressed in term placenta and primary term cytotrophoblast. Expressed mainly in the brain, but also in pancreas.

It is found in the cell membrane. The protein resides in the cell projection. It localises to the microvillus membrane. The enzyme catalyses L-cystine(out) + L-glutamate(in) = L-cystine(in) + L-glutamate(out). It catalyses the reaction an L-alpha-amino acid(in) + L-kynurenine(out) = an L-alpha-amino acid(out) + L-kynurenine(in). The catalysed reaction is N-acetyl-L-cysteine(out) + L-glutamate(in) = N-acetyl-L-cysteine(in) + L-glutamate(out). With respect to regulation, inhibited by erastin and sulfasalazine. Inhibited by (S)-lactate. Inactivated by p-chloromercuribenzoic acid and p-chloromercuribenzenesulfonic acid. In terms of biological role, heterodimer with SLC3A2, that functions as an antiporter by mediating the exchange of extracellular anionic L-cystine and intracellular L-glutamate across the cellular plasma membrane. Provides L-cystine for the maintenance of the redox balance between extracellular L-cystine and L-cysteine and for the maintenance of the intracellular levels of glutathione that is essential for cells protection from oxidative stress. The transport is sodium-independent, electroneutral with a stoichiometry of 1:1, and is drove by the high intracellular concentration of L-glutamate and the intracellular reduction of L-cystine. In addition, mediates the import of L-kynurenine leading to anti-ferroptotic signaling propagation required to maintain L-cystine and glutathione homeostasis. Moreover, mediates N-acetyl-L-cysteine uptake into the placenta leading to subsequently down-regulation of pathways associated with oxidative stress, inflammation and apoptosis. In vitro can also transport L-aspartate. May participate in astrocyte and meningeal cell proliferation during development and can provide neuroprotection by promoting glutathione synthesis and delivery from non-neuronal cells such as astrocytes and meningeal cells to immature neurons. Controls the production of pheomelanin pigment directly. This chain is Cystine/glutamate transporter, found in Homo sapiens (Human).